Consider the following 279-residue polypeptide: Tetra-spanning protein 1 (279 aa).

2 helical membrane-spanning segments follow: residues 25 to 45 (VWFS…LQAI) and 50 to 70 (APPF…AIVL). Residue N77 is glycosylated (N-linked (GlcNAc...) asparagine). The chain crosses the membrane as a helical span at residues 100–122 (YFILALSMLIDRPILFSLAPYAI). N-linked (GlcNAc...) asparagine glycosylation is present at N143. Residues 172–192 (MQLVASLETFLLFRLFFGVFL) form a helical membrane-spanning segment. The segment at 260-279 (VGTAQSRPTASSSTTAPSST) is disordered. Residues 262–279 (TAQSRPTASSSTTAPSST) are compositionally biased toward low complexity.

The protein belongs to the PER33/POM33 family. In terms of assembly, interacts with RTN1 and YOP1.

The protein localises to the golgi apparatus membrane. Its subcellular location is the endoplasmic reticulum membrane. The protein resides in the nucleus membrane. Its function is as follows. Required for the correct positioning of the cellular division plane by delimiting the actomyosin ring assembly at the cell equator. The polypeptide is Tetra-spanning protein 1 (tts1) (Schizosaccharomyces pombe (strain 972 / ATCC 24843) (Fission yeast)).